The following is a 286-amino-acid chain: Protein NipSnap homolog 2 (286 aa).

The transit peptide at 1-40 directs the protein to the mitochondrion; it reads MATRVLHSSCSGLYRAAGPARGKGHATAVIRSLSASHNRP.

It belongs to the NipSnap family.

It localises to the mitochondrion matrix. Functionally, protein involved in mitophagy. Accumulates on the mitochondria surface in response to mitochondrial depolarization and acts as a 'eat me' signal by recruiting proteins involved in selective autophagy. The polypeptide is Protein NipSnap homolog 2 (nipsnap2) (Danio rerio (Zebrafish)).